A 454-amino-acid polypeptide reads, in one-letter code: CCA-adding enzyme (454 aa).

Residues Ser-51 and Lys-54 each contribute to the ATP site. CTP is bound by residues Ser-51 and Lys-54. Positions 63, 65, and 118 each coordinate Mg(2+). 3 residues coordinate ATP: His-141, Lys-161, and Tyr-170. CTP-binding residues include His-141, Lys-161, and Tyr-170.

Belongs to the tRNA nucleotidyltransferase/poly(A) polymerase family. Archaeal CCA-adding enzyme subfamily. As to quaternary structure, homodimer. Mg(2+) is required as a cofactor.

The catalysed reaction is a tRNA precursor + 2 CTP + ATP = a tRNA with a 3' CCA end + 3 diphosphate. The enzyme catalyses a tRNA with a 3' CCA end + 2 CTP + ATP = a tRNA with a 3' CCACCA end + 3 diphosphate. Catalyzes the addition and repair of the essential 3'-terminal CCA sequence in tRNAs without using a nucleic acid template. Adds these three nucleotides in the order of C, C, and A to the tRNA nucleotide-73, using CTP and ATP as substrates and producing inorganic pyrophosphate. tRNA 3'-terminal CCA addition is required both for tRNA processing and repair. Also involved in tRNA surveillance by mediating tandem CCA addition to generate a CCACCA at the 3' terminus of unstable tRNAs. While stable tRNAs receive only 3'-terminal CCA, unstable tRNAs are marked with CCACCA and rapidly degraded. In Methanothermobacter thermautotrophicus (strain ATCC 29096 / DSM 1053 / JCM 10044 / NBRC 100330 / Delta H) (Methanobacterium thermoautotrophicum), this protein is CCA-adding enzyme.